The chain runs to 153 residues: 3-hydroxyacyl-[acyl-carrier-protein] dehydratase FabZ (153 aa).

The active site involves His-54.

This sequence belongs to the thioester dehydratase family. FabZ subfamily.

It is found in the cytoplasm. The enzyme catalyses a (3R)-hydroxyacyl-[ACP] = a (2E)-enoyl-[ACP] + H2O. In terms of biological role, involved in unsaturated fatty acids biosynthesis. Catalyzes the dehydration of short chain beta-hydroxyacyl-ACPs and long chain saturated and unsaturated beta-hydroxyacyl-ACPs. The protein is 3-hydroxyacyl-[acyl-carrier-protein] dehydratase FabZ of Shewanella amazonensis (strain ATCC BAA-1098 / SB2B).